Consider the following 477-residue polypeptide: 3-isopropylmalate dehydratase large subunit (477 aa).

The [4Fe-4S] cluster site is built by C352, C413, and C416.

It belongs to the aconitase/IPM isomerase family. LeuC type 1 subfamily. Heterodimer of LeuC and LeuD. [4Fe-4S] cluster is required as a cofactor.

It catalyses the reaction (2R,3S)-3-isopropylmalate = (2S)-2-isopropylmalate. It participates in amino-acid biosynthesis; L-leucine biosynthesis; L-leucine from 3-methyl-2-oxobutanoate: step 2/4. Functionally, catalyzes the isomerization between 2-isopropylmalate and 3-isopropylmalate, via the formation of 2-isopropylmaleate. In Pseudomonas putida (strain W619), this protein is 3-isopropylmalate dehydratase large subunit.